Reading from the N-terminus, the 397-residue chain is Adenylosuccinate synthetase (397 aa).

GTP is bound by residues 11–17 and 39–41; these read GDEGKGK and GHT. D12 acts as the Proton acceptor in catalysis. D12 and G39 together coordinate Mg(2+). IMP contacts are provided by residues 12–15, 37–40, T125, R139, Q212, T227, and R290; these read DEGK and NAGH. The active-site Proton donor is the H40. 286–292 is a binding site for substrate; it reads STTGRPR. GTP contacts are provided by residues R292, 318–320, and 386–388; these read KAD and STG.

This sequence belongs to the adenylosuccinate synthetase family. In terms of assembly, homodimer. Requires Mg(2+) as cofactor.

The protein localises to the cytoplasm. The enzyme catalyses IMP + L-aspartate + GTP = N(6)-(1,2-dicarboxyethyl)-AMP + GDP + phosphate + 2 H(+). It functions in the pathway purine metabolism; AMP biosynthesis via de novo pathway; AMP from IMP: step 1/2. In terms of biological role, plays an important role in the de novo pathway of purine nucleotide biosynthesis. Catalyzes the first committed step in the biosynthesis of AMP from IMP. The chain is Adenylosuccinate synthetase from Thermotoga maritima (strain ATCC 43589 / DSM 3109 / JCM 10099 / NBRC 100826 / MSB8).